Reading from the N-terminus, the 474-residue chain is Protein nucleotidyltransferase YdiU (474 aa).

Gly89, Gly91, Arg92, Lys112, Asp124, Gly125, Arg178, and Arg185 together coordinate ATP. The active-site Proton acceptor is Asp262. Mg(2+)-binding residues include Asn263 and Asp272. Asp272 serves as a coordination point for ATP.

It belongs to the SELO family. Requires Mg(2+) as cofactor. Mn(2+) serves as cofactor.

It carries out the reaction L-seryl-[protein] + ATP = 3-O-(5'-adenylyl)-L-seryl-[protein] + diphosphate. The enzyme catalyses L-threonyl-[protein] + ATP = 3-O-(5'-adenylyl)-L-threonyl-[protein] + diphosphate. It catalyses the reaction L-tyrosyl-[protein] + ATP = O-(5'-adenylyl)-L-tyrosyl-[protein] + diphosphate. The catalysed reaction is L-histidyl-[protein] + UTP = N(tele)-(5'-uridylyl)-L-histidyl-[protein] + diphosphate. It carries out the reaction L-seryl-[protein] + UTP = O-(5'-uridylyl)-L-seryl-[protein] + diphosphate. The enzyme catalyses L-tyrosyl-[protein] + UTP = O-(5'-uridylyl)-L-tyrosyl-[protein] + diphosphate. In terms of biological role, nucleotidyltransferase involved in the post-translational modification of proteins. It can catalyze the addition of adenosine monophosphate (AMP) or uridine monophosphate (UMP) to a protein, resulting in modifications known as AMPylation and UMPylation. The chain is Protein nucleotidyltransferase YdiU from Trichodesmium erythraeum (strain IMS101).